Here is a 423-residue protein sequence, read N- to C-terminus: Sporulation-regulated protein 28 (423 aa).

The 315-residue stretch at K28–E342 folds into the Septin-type G domain. A G1 motif region spans residues G38–S45. Residues G38 to S45, G124, K204 to E212, and R291 contribute to the GTP site. A G3 motif region spans residues L121 to G124. Positions P203–D206 are G4 motif. Residues R360–D381 show a composition bias toward polar residues. A disordered region spans residues R360 to E385. The stretch at D384 to A417 forms a coiled coil.

Belongs to the TRAFAC class TrmE-Era-EngA-EngB-Septin-like GTPase superfamily. Septin GTPase family. As to quaternary structure, interacts with itself. Interacts with CDC11 and SPR3; probably to form a ring at the bud neck.

It localises to the membrane. The protein resides in the bud neck. Septins are GTPases involved in cytokinesis that assemble into filaments and form a ring at the cleavage site. May act by recruiting MYO1 and HOF1, a protein involved in septation, to the site of cleavage. Septins are also involved in cell morphogenesis, bud site selection, chitin deposition, cell cycle regulation, cell compartmentalization and spore wall formation. This is Sporulation-regulated protein 28 (SPR28) from Saccharomyces cerevisiae (strain ATCC 204508 / S288c) (Baker's yeast).